Consider the following 375-residue polypeptide: D-alanine--D-alanine ligase (375 aa).

The ATP-grasp domain maps to K145–E348. I175 to E230 is an ATP binding site. Mg(2+) contacts are provided by D302, E315, and N317.

The protein belongs to the D-alanine--D-alanine ligase family. The cofactor is Mg(2+). Mn(2+) serves as cofactor.

It localises to the cytoplasm. The catalysed reaction is 2 D-alanine + ATP = D-alanyl-D-alanine + ADP + phosphate + H(+). It participates in cell wall biogenesis; peptidoglycan biosynthesis. In terms of biological role, cell wall formation. The sequence is that of D-alanine--D-alanine ligase from Baumannia cicadellinicola subsp. Homalodisca coagulata.